The primary structure comprises 184 residues: uncharacterized protein (184 aa).

A helical transmembrane segment spans residues 35 to 55 (LSFLIYILYTFSISGLSTFVI).

The protein resides in the membrane. This is an uncharacterized protein from Schizosaccharomyces pombe (strain 972 / ATCC 24843) (Fission yeast).